Reading from the N-terminus, the 189-residue chain is Segregation and condensation protein B (189 aa).

The protein belongs to the ScpB family. In terms of assembly, homodimer. Homodimerization may be required to stabilize the binding of ScpA to the Smc head domains. Component of a cohesin-like complex composed of ScpA, ScpB and the Smc homodimer, in which ScpA and ScpB bind to the head domain of Smc. The presence of the three proteins is required for the association of the complex with DNA.

It localises to the cytoplasm. Functionally, participates in chromosomal partition during cell division. May act via the formation of a condensin-like complex containing Smc and ScpA that pull DNA away from mid-cell into both cell halves. The protein is Segregation and condensation protein B of Streptococcus pneumoniae serotype 19F (strain G54).